Reading from the N-terminus, the 371-residue chain is Probable tRNA sulfurtransferase (371 aa).

A THUMP domain is found at 54–156 (NANIEALSEV…NEMTYFYHKV (103 aa)). ATP contacts are provided by residues 174 to 175 (LF), 199 to 200 (NF), K254, G276, and Q285.

Belongs to the ThiI family.

It is found in the cytoplasm. The catalysed reaction is [ThiI sulfur-carrier protein]-S-sulfanyl-L-cysteine + a uridine in tRNA + 2 reduced [2Fe-2S]-[ferredoxin] + ATP + H(+) = [ThiI sulfur-carrier protein]-L-cysteine + a 4-thiouridine in tRNA + 2 oxidized [2Fe-2S]-[ferredoxin] + AMP + diphosphate. It catalyses the reaction [ThiS sulfur-carrier protein]-C-terminal Gly-Gly-AMP + S-sulfanyl-L-cysteinyl-[cysteine desulfurase] + AH2 = [ThiS sulfur-carrier protein]-C-terminal-Gly-aminoethanethioate + L-cysteinyl-[cysteine desulfurase] + A + AMP + 2 H(+). The protein operates within cofactor biosynthesis; thiamine diphosphate biosynthesis. Its function is as follows. Catalyzes the ATP-dependent transfer of a sulfur to tRNA to produce 4-thiouridine in position 8 of tRNAs, which functions as a near-UV photosensor. Also catalyzes the transfer of sulfur to the sulfur carrier protein ThiS, forming ThiS-thiocarboxylate. This is a step in the synthesis of thiazole, in the thiamine biosynthesis pathway. The sulfur is donated as persulfide by IscS. The protein is Probable tRNA sulfurtransferase of Saccharolobus solfataricus (strain ATCC 35092 / DSM 1617 / JCM 11322 / P2) (Sulfolobus solfataricus).